A 793-amino-acid polypeptide reads, in one-letter code: ABC transporter G family member 1 (793 aa).

The segment covering 1-20 (MDSNNNNNNENEAFSGASES) has biased composition (low complexity). The segment at 1 to 96 (MDSNNNNNNE…NNNQNNNIIN (96 aa)) is disordered. Residues 21–37 (SEFRKIVEENENEREFE) are compositionally biased toward basic and acidic residues. Residues 59-68 (ETINPNISLD) show a composition bias toward polar residues. The stretch at 67 to 102 (LDNNNNNNQNNQNNQNNNNNNNNQNNNIINNLNKKN) forms a coiled coil. Residues 69-96 (NNNNNNQNNQNNQNNNNNNNNQNNNIIN) are compositionally biased toward low complexity. Residues 123–364 (VQITEKGKKK…FNANGYHCSE (242 aa)) enclose the ABC transporter domain. Residue 156–163 (GPSGAGKT) participates in ATP binding. Residues 382–398 (DQADSDDDDYNDEEEEI) are compositionally biased toward acidic residues. Residues 382–457 (DQADSDDDDY…QSTDGRARRR (76 aa)) form a disordered region. Residues 399–413 (GGGGGGSGGGAGGIE) are compositionally biased toward gly residues. Residues 421–437 (PTMNGSAVDNIKNNELK) are compositionally biased toward polar residues. Over residues 438–448 (QQQQQQQQQQQ) the composition is skewed to low complexity. The ABC transmembrane type-2 domain maps to 527-785 (MAFKVNLIQA…VLTFLVLKLK (259 aa)). The next 7 membrane-spanning stretches (helical) occupy residues 533–553 (LIQA…LGLG), 563–583 (VVAF…IHVF), 610–630 (FMDA…VYWM), 647–667 (FVLM…LISS), 674–694 (VGTA…GFFI), 701–721 (GWLV…AAVI), and 764–784 (VWIL…VLKL).

Belongs to the ABC transporter superfamily. ABCG family.

The protein resides in the membrane. The protein is ABC transporter G family member 1 (abcG1) of Dictyostelium discoideum (Social amoeba).